A 325-amino-acid polypeptide reads, in one-letter code: 33 kDa chaperonin (325 aa).

2 disulfide bridges follow: cysteine 260-cysteine 262 and cysteine 293-cysteine 296.

The protein belongs to the HSP33 family. In terms of processing, under oxidizing conditions two disulfide bonds are formed involving the reactive cysteines. Under reducing conditions zinc is bound to the reactive cysteines and the protein is inactive.

Its subcellular location is the cytoplasm. Its function is as follows. Redox regulated molecular chaperone. Protects both thermally unfolding and oxidatively damaged proteins from irreversible aggregation. Plays an important role in the bacterial defense system toward oxidative stress. The sequence is that of 33 kDa chaperonin from Aquifex aeolicus (strain VF5).